The primary structure comprises 320 residues: Protoheme IX farnesyltransferase (320 aa).

The next 9 helical transmembrane spans lie at 38–58 (VIEL…RGFP), 60–80 (IGLI…AGVF), 109–129 (EALV…WFGA), 132–152 (LSAW…TMIL), 159–179 (NIVW…AAVT), 184–204 (WPAI…YWPL), 222–242 (AIAG…AMVA), 254–276 (GWVY…HALY), and 299–319 (YLTL…AIVG).

It belongs to the UbiA prenyltransferase family. Protoheme IX farnesyltransferase subfamily.

The protein localises to the cell membrane. The catalysed reaction is heme b + (2E,6E)-farnesyl diphosphate + H2O = Fe(II)-heme o + diphosphate. It functions in the pathway porphyrin-containing compound metabolism; heme O biosynthesis; heme O from protoheme: step 1/1. Converts heme B (protoheme IX) to heme O by substitution of the vinyl group on carbon 2 of heme B porphyrin ring with a hydroxyethyl farnesyl side group. The polypeptide is Protoheme IX farnesyltransferase (Paenarthrobacter aurescens (strain TC1)).